Here is a 189-residue protein sequence, read N- to C-terminus: Elongation factor P (189 aa).

At Lys34 the chain carries N6-(3,6-diaminohexanoyl)-5-hydroxylysine.

It belongs to the elongation factor P family. In terms of processing, may be beta-lysylated on the epsilon-amino group of Lys-34 by the combined action of EpmA and EpmB, and then hydroxylated on the C5 position of the same residue by EpmC (if this protein is present). Lysylation is critical for the stimulatory effect of EF-P on peptide-bond formation. The lysylation moiety may extend toward the peptidyltransferase center and stabilize the terminal 3-CCA end of the tRNA. Hydroxylation of the C5 position on Lys-34 may allow additional potential stabilizing hydrogen-bond interactions with the P-tRNA.

It localises to the cytoplasm. It participates in protein biosynthesis; polypeptide chain elongation. In terms of biological role, involved in peptide bond synthesis. Alleviates ribosome stalling that occurs when 3 or more consecutive Pro residues or the sequence PPG is present in a protein, possibly by augmenting the peptidyl transferase activity of the ribosome. Modification of Lys-34 is required for alleviation. The sequence is that of Elongation factor P from Legionella pneumophila (strain Paris).